A 125-amino-acid polypeptide reads, in one-letter code: Large ribosomal subunit protein bL12 (125 aa).

It belongs to the bacterial ribosomal protein bL12 family. As to quaternary structure, homodimer. Part of the ribosomal stalk of the 50S ribosomal subunit. Forms a multimeric L10(L12)X complex, where L10 forms an elongated spine to which 2 to 4 L12 dimers bind in a sequential fashion. Binds GTP-bound translation factors.

Its function is as follows. Forms part of the ribosomal stalk which helps the ribosome interact with GTP-bound translation factors. Is thus essential for accurate translation. This Methylobacterium radiotolerans (strain ATCC 27329 / DSM 1819 / JCM 2831 / NBRC 15690 / NCIMB 10815 / 0-1) protein is Large ribosomal subunit protein bL12.